The primary structure comprises 272 residues: Granaticin polyketide synthase putative ketoacyl reductase 1 (272 aa).

21–45 (LVTGATSGIGLAIARRLAALGARTF) serves as a coordination point for NAD(+). Residue Ser-155 participates in substrate binding. Tyr-168 acts as the Proton acceptor in catalysis.

It belongs to the short-chain dehydrogenases/reductases (SDR) family.

Its pathway is antibiotic biosynthesis; granaticin biosynthesis. The chain is Granaticin polyketide synthase putative ketoacyl reductase 1 (gra-orf5) from Streptomyces violaceoruber.